Consider the following 706-residue polypeptide: Probable rhamnogalacturonate lyase B (706 aa).

A signal peptide spans 1–19 (MRLLHPLIPASLLLTLTSA). N-linked (GlcNAc...) asparagine glycans are attached at residues Asn-27, Asn-40, Asn-143, Asn-239, Asn-285, Asn-380, Asn-495, Asn-569, Asn-597, and Asn-638.

The protein belongs to the polysaccharide lyase 4 family.

The protein localises to the secreted. It carries out the reaction Endotype eliminative cleavage of L-alpha-rhamnopyranosyl-(1-&gt;4)-alpha-D-galactopyranosyluronic acid bonds of rhamnogalacturonan I domains in ramified hairy regions of pectin leaving L-rhamnopyranose at the reducing end and 4-deoxy-4,5-unsaturated D-galactopyranosyluronic acid at the non-reducing end.. In terms of biological role, pectinolytic enzymes consist of four classes of enzymes: pectin lyase, polygalacturonase, pectin methylesterase and rhamnogalacturonase. Degrades the rhamnogalacturonan I (RG-I) backbone of pectin. This is Probable rhamnogalacturonate lyase B (rglB) from Aspergillus niger (strain ATCC MYA-4892 / CBS 513.88 / FGSC A1513).